The primary structure comprises 463 residues: Chromosomal replication initiator protein DnaA (463 aa).

A domain I, interacts with DnaA modulators region spans residues M1–T83. Positions T83–S124 are domain II. Positions T125–S343 are domain III, AAA+ region. The ATP site is built by G171, G173, K174, and T175. The segment at N344–N463 is domain IV, binds dsDNA.

The protein belongs to the DnaA family. In terms of assembly, oligomerizes as a right-handed, spiral filament on DNA at oriC.

Its subcellular location is the cytoplasm. Plays an essential role in the initiation and regulation of chromosomal replication. ATP-DnaA binds to the origin of replication (oriC) to initiate formation of the DNA replication initiation complex once per cell cycle. Binds the DnaA box (a 9 base pair repeat at the origin) and separates the double-stranded (ds)DNA. Forms a right-handed helical filament on oriC DNA; dsDNA binds to the exterior of the filament while single-stranded (ss)DNA is stabiized in the filament's interior. The ATP-DnaA-oriC complex binds and stabilizes one strand of the AT-rich DNA unwinding element (DUE), permitting loading of DNA polymerase. After initiation quickly degrades to an ADP-DnaA complex that is not apt for DNA replication. Binds acidic phospholipids. The polypeptide is Chromosomal replication initiator protein DnaA (Rickettsia massiliae (strain Mtu5)).